We begin with the raw amino-acid sequence, 283 residues long: Putative ABC transporter ATP-binding protein MA_4342 (283 aa).

Residues 3–238 form the ABC transporter domain; the sequence is IILENVSFFY…KNVPLPPVTS (236 aa). 40–47 is a binding site for ATP; the sequence is GEKGAGKS.

It belongs to the ABC transporter superfamily.

It is found in the cell membrane. In terms of biological role, probably part of an ABC transporter complex. Responsible for energy coupling to the transport system. The protein is Putative ABC transporter ATP-binding protein MA_4342 of Methanosarcina acetivorans (strain ATCC 35395 / DSM 2834 / JCM 12185 / C2A).